A 449-amino-acid chain; its full sequence is Phosphoglucosamine mutase (449 aa).

Residue Ser-105 is the Phosphoserine intermediate of the active site. Positions 105, 242, 244, and 246 each coordinate Mg(2+). Residue Ser-105 is modified to Phosphoserine.

Belongs to the phosphohexose mutase family. It depends on Mg(2+) as a cofactor. Activated by phosphorylation.

It carries out the reaction alpha-D-glucosamine 1-phosphate = D-glucosamine 6-phosphate. In terms of biological role, catalyzes the conversion of glucosamine-6-phosphate to glucosamine-1-phosphate. This Clavibacter sepedonicus (Clavibacter michiganensis subsp. sepedonicus) protein is Phosphoglucosamine mutase.